The following is a 662-amino-acid chain: Acyl-coenzyme A oxidase acox-1.4 (662 aa).

Residues 148–151 (YAQT), 156–157 (GT), and Gly-190 each bind FAD. Substrate contacts are provided by residues 284 to 287 (KVNH) and Arg-294. FAD is bound by residues Arg-319 and 339-342 (QQHR). 4 residues coordinate ATP: His-341, Ser-391, His-395, and Gln-403. Gly-410 lines the FAD pocket. 432-433 (YE) is a binding site for substrate. Glu-433 acts as the Proton acceptor in catalysis. Glu-435 contributes to the FAD binding site. Residues 526-529 (RASR) and Tyr-574 contribute to the ATP site. Residues 660-662 (AKL) carry the Microbody targeting signal motif.

Belongs to the acyl-CoA oxidase family. In terms of assembly, homodimer. FAD serves as cofactor.

It is found in the peroxisome. It catalyses the reaction asc-C9-CoA + O2 = asc-DeltaC9-CoA + H2O2. The protein operates within lipid metabolism; peroxisomal fatty acid beta-oxidation. Activated by ATP. ATP binding leads to a conformational change that promotes FAD cofactor binding and enzyme activity. ATP binding likely occurs during acox-1.4 folding and/or dimer formation. Functionally, involved in the first step of peroxisomal beta-oxidation by catalyzing the desaturation of fatty acid-derived side chains of ascaroside pheromones, which regulates development and behavior. Specifically, shortens ascarosides with a 9-carbon side chain (asc-C9) and, in association with acox-1.1, may contribute to the shortening of ascarosides with a 11-carbon side chain (asc-C11). May contribute to the production of indol-3-carbonyl(IC)-ascarosides in association with acox-1.1 and acox-3. The protein is Acyl-coenzyme A oxidase acox-1.4 of Caenorhabditis elegans.